A 163-amino-acid chain; its full sequence is N5-carboxyaminoimidazole ribonucleotide mutase (163 aa).

The substrate site is built by S11, D14, and R41.

This sequence belongs to the AIR carboxylase family. Class I subfamily.

The enzyme catalyses 5-carboxyamino-1-(5-phospho-D-ribosyl)imidazole + H(+) = 5-amino-1-(5-phospho-D-ribosyl)imidazole-4-carboxylate. Its pathway is purine metabolism; IMP biosynthesis via de novo pathway; 5-amino-1-(5-phospho-D-ribosyl)imidazole-4-carboxylate from 5-amino-1-(5-phospho-D-ribosyl)imidazole (N5-CAIR route): step 2/2. In terms of biological role, catalyzes the conversion of N5-carboxyaminoimidazole ribonucleotide (N5-CAIR) to 4-carboxy-5-aminoimidazole ribonucleotide (CAIR). The protein is N5-carboxyaminoimidazole ribonucleotide mutase of Pseudomonas aeruginosa (strain ATCC 15692 / DSM 22644 / CIP 104116 / JCM 14847 / LMG 12228 / 1C / PRS 101 / PAO1).